Reading from the N-terminus, the 425-residue chain is MTDPRRRTGRHFLTPENLSSTLQITNLPPEWNQDIITSVVAGSGPVIDIKAKNDPRTGKLTGVLFDYLTSKDCKRAWEILNRIENFPVKIEQIIPPNYKDHLRETANKNSQKQVLQLNRDSYPFEAGLELPFEMVTEVPIPRRPPPPQAANNTNSVSNNTNIQFPDILSKASKHLPSFQDGSIIAPDKISQNLSKIPPLQLIEIISNLKILSNQENIQKSQLESFLDTNSDITISVTQALLEMGFIDYSVVTKVLKSQVGEAPSLLSSNNTSNSNTPVSVIRNNTPLHVPSNEVSNNPNNMPLNVAMPMPMSTPPFIPLPLQQQPFGFAPPGPFMPPAQGPSMGQPVLANQLGQVQQQNISSTEGPSNANKANDSGTINMAKLQLLPENQQDMIKQVLTLTPAQIQSLPSDQQLMVENFRKEYII.

The residue at position 272 (Ser-272) is a Phosphoserine.

As to quaternary structure, component of the cleavage and polyadenylation factor (CPF) complex, which is composed of PTI1, SYC1, SSU72, GLC7, MPE1, REF2, PFS2, PTA1, YSH1/BRR5, SWD2, CFT2/YDH1, YTH1, CFT1/YHH1, FIP1 and PAP1. Component of the APT complex, which is a subcomplex of CPF, and is composed of PTI1, SYC1, SSU72, GLC7, REF2, PTA1 and SWD2.

The protein resides in the nucleus. Component of the cleavage and polyadenylation factor (CPF) complex, which plays a key role in polyadenylation-dependent pre-mRNA 3'-end formation and cooperates with cleavage factors including the CFIA complex and NAB4/CFIB. Component of the APT complex, which may be involved in polyadenylation-independent transcript 3'-end formation. PTI1 is required for 3'-end formation of snoRNAs. The polypeptide is Protein PTI1 (PTI1) (Saccharomyces cerevisiae (strain ATCC 204508 / S288c) (Baker's yeast)).